The chain runs to 333 residues: Ketol-acid reductoisomerase (NAD(P)(+)) (333 aa).

A KARI N-terminal Rossmann domain is found at 2 to 182; that stretch reads AKIYYDEDAS…GATRAGVIET (181 aa). Residues 25 to 28, Ser-51, and 83 to 86 each bind NADP(+); these read YGSQ and DTVQ. His-108 is a catalytic residue. Gly-134 serves as a coordination point for NADP(+). One can recognise a KARI C-terminal knotted domain in the interval 183–327; sequence TFREETETDL…KELRQMMPWL (145 aa). The Mg(2+) site is built by Asp-191, Glu-195, Glu-227, and Glu-231. A substrate-binding site is contributed by Ser-252.

It belongs to the ketol-acid reductoisomerase family. Mg(2+) is required as a cofactor.

The enzyme catalyses (2R)-2,3-dihydroxy-3-methylbutanoate + NAD(+) = (2S)-2-acetolactate + NADH + H(+). It carries out the reaction (2R)-2,3-dihydroxy-3-methylbutanoate + NADP(+) = (2S)-2-acetolactate + NADPH + H(+). It participates in amino-acid biosynthesis; L-isoleucine biosynthesis; L-isoleucine from 2-oxobutanoate: step 2/4. Its pathway is amino-acid biosynthesis; L-valine biosynthesis; L-valine from pyruvate: step 2/4. Involved in the biosynthesis of branched-chain amino acids (BCAA). Catalyzes an alkyl-migration followed by a ketol-acid reduction of (S)-2-acetolactate (S2AL) to yield (R)-2,3-dihydroxy-isovalerate. In the isomerase reaction, S2AL is rearranged via a Mg-dependent methyl migration to produce 3-hydroxy-3-methyl-2-ketobutyrate (HMKB). In the reductase reaction, this 2-ketoacid undergoes a metal-dependent reduction by NADPH or NADH to yield (R)-2,3-dihydroxy-isovalerate. In Hydrogenobaculum sp. (strain Y04AAS1), this protein is Ketol-acid reductoisomerase (NAD(P)(+)).